The sequence spans 483 residues: Regulatory protein ViaA (483 aa).

It belongs to the ViaA family. In terms of assembly, homodimer. Interacts with RavA.

Its subcellular location is the cytoplasm. Functionally, component of the RavA-ViaA chaperone complex, which may act on the membrane to optimize the function of some of the respiratory chains. ViaA stimulates the ATPase activity of RavA. The polypeptide is Regulatory protein ViaA (Escherichia fergusonii (strain ATCC 35469 / DSM 13698 / CCUG 18766 / IAM 14443 / JCM 21226 / LMG 7866 / NBRC 102419 / NCTC 12128 / CDC 0568-73)).